A 385-amino-acid chain; its full sequence is Pectate lyase E (385 aa).

Residues 1 to 30 form the signal peptide; it reads MKNTRVRSIGTKSLLAAVVTAALMATSAYA. Asp164 is a Ca(2+) binding site. Repeat 1 spans residues 177–182; the sequence is DHVTIS. The 2 X 6 AA approximate repeats stretch occupies residues 177-218; the sequence is DHVTISDGSFTDDKYTTKDGEKYVQHDGALDIKKGSDYVTIS. Ca(2+) is bound at residue Asp207. Repeat 2 spans residues 213–218; that stretch reads DYVTIS. Residue Arg260 is part of the active site.

The protein belongs to the polysaccharide lyase 1 family. PLBC subfamily. Ca(2+) is required as a cofactor.

It localises to the secreted. It catalyses the reaction Eliminative cleavage of (1-&gt;4)-alpha-D-galacturonan to give oligosaccharides with 4-deoxy-alpha-D-galact-4-enuronosyl groups at their non-reducing ends.. It functions in the pathway glycan metabolism; pectin degradation; 2-dehydro-3-deoxy-D-gluconate from pectin: step 2/5. Involved in maceration and soft-rotting of plant tissue. The protein is Pectate lyase E (pelE) of Dickeya chrysanthemi (Pectobacterium chrysanthemi).